The following is a 407-amino-acid chain: MKTYLVGGAVRDGLLNLPVKDKDWVVVGASPQQMLDRGYQQVGRDFPVFLHPESHEEYALARTERKSGRGYTGFTCYSAPDVTLEQDLARRDLTINAIAQDAGGNYCDPYGGRADLQQRLLRHVSGAFNEDPLRVLRVARFAARFAHLNFRIADETLLLMQAMTHSGELHHLTPERVWKETELALQTPSPQVFFQVLRDCGALAVLFPELDNLYGVPAPAKWHPEIDTGVHALMALAMAARLSQEIDIRFATLFHDVGKALTPKVKWPSHHGHGPAGVPLVAALCERLRVPNALRDLALLVTEFHDLVHTIQCQPPTELVALFDRVDAWRKPQRVQQIALTSEADARGRTGFENNPYPQGDYLREAWRVVQSVSTKEVVDAGFKGMAVREELTRRRIAALDAWKQVQ.

Residues glycine 8 and arginine 11 each contribute to the ATP site. Residues glycine 8 and arginine 11 each coordinate CTP. Aspartate 21 and aspartate 23 together coordinate Mg(2+). The ATP site is built by arginine 91, arginine 137, and arginine 140. CTP-binding residues include arginine 91, arginine 137, and arginine 140. The 102-residue stretch at 228 to 329 folds into the HD domain; the sequence is TGVHALMALA…VALFDRVDAW (102 aa).

This sequence belongs to the tRNA nucleotidyltransferase/poly(A) polymerase family. Bacterial CCA-adding enzyme type 1 subfamily. Monomer. Can also form homodimers and oligomers. Mg(2+) serves as cofactor. Requires Ni(2+) as cofactor.

It catalyses the reaction a tRNA precursor + 2 CTP + ATP = a tRNA with a 3' CCA end + 3 diphosphate. The catalysed reaction is a tRNA with a 3' CCA end + 2 CTP + ATP = a tRNA with a 3' CCACCA end + 3 diphosphate. In terms of biological role, catalyzes the addition and repair of the essential 3'-terminal CCA sequence in tRNAs without using a nucleic acid template. Adds these three nucleotides in the order of C, C, and A to the tRNA nucleotide-73, using CTP and ATP as substrates and producing inorganic pyrophosphate. tRNA 3'-terminal CCA addition is required both for tRNA processing and repair. Also involved in tRNA surveillance by mediating tandem CCA addition to generate a CCACCA at the 3' terminus of unstable tRNAs. While stable tRNAs receive only 3'-terminal CCA, unstable tRNAs are marked with CCACCA and rapidly degraded. The sequence is that of Multifunctional CCA protein from Erwinia tasmaniensis (strain DSM 17950 / CFBP 7177 / CIP 109463 / NCPPB 4357 / Et1/99).